Here is a 521-residue protein sequence, read N- to C-terminus: NAD(P)H-quinone oxidoreductase subunit 2 (521 aa).

Transmembrane regions (helical) follow at residues 14 to 34 (VILP…TDLI), 42 to 62 (LTPA…TLQW), 79 to 99 (LSIV…LLSI), 109 to 129 (LGEF…LSGA), 132 to 152 (LVTI…LTGY), 167 to 187 (LLIG…LYGL), 207 to 227 (LALL…ISAV), 241 to 261 (PTPI…ALAI), 275 to 295 (WHFV…VVAL), 303 to 323 (LLAY…IAGT), 331 to 351 (VYYL…VILF), 375 to 395 (LGLS…GFFG), 397 to 417 (LYLF…LALI), and 463 to 483 (AGLV…NPLF).

The protein belongs to the complex I subunit 2 family. In terms of assembly, NDH-1 can be composed of about 15 different subunits; different subcomplexes with different compositions have been identified which probably have different functions.

It is found in the cellular thylakoid membrane. It catalyses the reaction a plastoquinone + NADH + (n+1) H(+)(in) = a plastoquinol + NAD(+) + n H(+)(out). The catalysed reaction is a plastoquinone + NADPH + (n+1) H(+)(in) = a plastoquinol + NADP(+) + n H(+)(out). NDH-1 shuttles electrons from an unknown electron donor, via FMN and iron-sulfur (Fe-S) centers, to quinones in the respiratory and/or the photosynthetic chain. The immediate electron acceptor for the enzyme in this species is believed to be plastoquinone. Couples the redox reaction to proton translocation, and thus conserves the redox energy in a proton gradient. Cyanobacterial NDH-1 also plays a role in inorganic carbon-concentration. This is NAD(P)H-quinone oxidoreductase subunit 2 from Synechococcus elongatus (strain ATCC 33912 / PCC 7942 / FACHB-805) (Anacystis nidulans R2).